Here is a 152-residue protein sequence, read N- to C-terminus: Phosphopantetheine adenylyltransferase (152 aa).

A substrate-binding site is contributed by S9. Residues 9–10 and H17 contribute to the ATP site; that span reads SF. K41, T73, and R87 together coordinate substrate. Residues 88-90, E98, and 122-128 contribute to the ATP site; these read GLR and TSFISSS.

This sequence belongs to the bacterial CoaD family. In terms of assembly, homohexamer. The cofactor is Mg(2+).

It is found in the cytoplasm. It carries out the reaction (R)-4'-phosphopantetheine + ATP + H(+) = 3'-dephospho-CoA + diphosphate. It participates in cofactor biosynthesis; coenzyme A biosynthesis; CoA from (R)-pantothenate: step 4/5. Its function is as follows. Reversibly transfers an adenylyl group from ATP to 4'-phosphopantetheine, yielding dephospho-CoA (dPCoA) and pyrophosphate. This Flavobacterium johnsoniae (strain ATCC 17061 / DSM 2064 / JCM 8514 / BCRC 14874 / CCUG 350202 / NBRC 14942 / NCIMB 11054 / UW101) (Cytophaga johnsonae) protein is Phosphopantetheine adenylyltransferase.